The following is a 124-amino-acid chain: Large ribosomal subunit protein bL12 (124 aa).

Belongs to the bacterial ribosomal protein bL12 family. Homodimer. Part of the ribosomal stalk of the 50S ribosomal subunit. Forms a multimeric L10(L12)X complex, where L10 forms an elongated spine to which 2 to 4 L12 dimers bind in a sequential fashion. Binds GTP-bound translation factors.

Functionally, forms part of the ribosomal stalk which helps the ribosome interact with GTP-bound translation factors. Is thus essential for accurate translation. This is Large ribosomal subunit protein bL12 from Brucella anthropi (strain ATCC 49188 / DSM 6882 / CCUG 24695 / JCM 21032 / LMG 3331 / NBRC 15819 / NCTC 12168 / Alc 37) (Ochrobactrum anthropi).